Reading from the N-terminus, the 612-residue chain is Dihydroxy-acid dehydratase (612 aa).

Asp81 contacts Mg(2+). Position 122 (Cys122) interacts with [2Fe-2S] cluster. Positions 123 and 124 each coordinate Mg(2+). Lys124 is modified (N6-carboxylysine). Cys195 contacts [2Fe-2S] cluster. Glu491 contributes to the Mg(2+) binding site. Ser517 (proton acceptor) is an active-site residue.

Belongs to the IlvD/Edd family. As to quaternary structure, homodimer. Requires [2Fe-2S] cluster as cofactor. Mg(2+) is required as a cofactor.

The enzyme catalyses (2R)-2,3-dihydroxy-3-methylbutanoate = 3-methyl-2-oxobutanoate + H2O. It catalyses the reaction (2R,3R)-2,3-dihydroxy-3-methylpentanoate = (S)-3-methyl-2-oxopentanoate + H2O. Its pathway is amino-acid biosynthesis; L-isoleucine biosynthesis; L-isoleucine from 2-oxobutanoate: step 3/4. It functions in the pathway amino-acid biosynthesis; L-valine biosynthesis; L-valine from pyruvate: step 3/4. Functions in the biosynthesis of branched-chain amino acids. Catalyzes the dehydration of (2R,3R)-2,3-dihydroxy-3-methylpentanoate (2,3-dihydroxy-3-methylvalerate) into 2-oxo-3-methylpentanoate (2-oxo-3-methylvalerate) and of (2R)-2,3-dihydroxy-3-methylbutanoate (2,3-dihydroxyisovalerate) into 2-oxo-3-methylbutanoate (2-oxoisovalerate), the penultimate precursor to L-isoleucine and L-valine, respectively. This is Dihydroxy-acid dehydratase from Sinorhizobium fredii (strain NBRC 101917 / NGR234).